The primary structure comprises 418 residues: Mitochondrial distribution and morphology protein 10 (418 aa).

This sequence belongs to the MDM10 family. Component of the ER-mitochondria encounter structure (ERMES) or MDM complex, composed of MMM1, MDM10, MDM12 and MDM34. Associates with the mitochondrial outer membrane sorting assembly machinery SAM(core) complex.

Its subcellular location is the mitochondrion outer membrane. In terms of biological role, component of the ERMES/MDM complex, which serves as a molecular tether to connect the endoplasmic reticulum and mitochondria. Components of this complex are involved in the control of mitochondrial shape and protein biogenesis and may function in phospholipid exchange. MDM10 is involved in the late assembly steps of the general translocase of the mitochondrial outer membrane (TOM complex). Functions in the TOM40-specific route of the assembly of outer membrane beta-barrel proteins, including the association of TOM40 with the receptor TOM22 and small TOM proteins. Can associate with the SAM(core) complex as well as the MDM12-MMM1 complex, both involved in late steps of the major beta-barrel assembly pathway, that is responsible for biogenesis of all outer membrane beta-barrel proteins. May act as a switch that shuttles between both complexes and channels precursor proteins into the TOM40-specific pathway. Plays a role in mitochondrial morphology and in the inheritance of mitochondria. The sequence is that of Mitochondrial distribution and morphology protein 10 from Meyerozyma guilliermondii (strain ATCC 6260 / CBS 566 / DSM 6381 / JCM 1539 / NBRC 10279 / NRRL Y-324) (Yeast).